Here is a 1375-residue protein sequence, read N- to C-terminus: DNA-directed RNA polymerase subunit beta (1375 aa).

Belongs to the RNA polymerase beta chain family. The RNAP catalytic core consists of 2 alpha, 1 beta, 1 beta' and 1 omega subunit. When a sigma factor is associated with the core the holoenzyme is formed, which can initiate transcription.

It carries out the reaction RNA(n) + a ribonucleoside 5'-triphosphate = RNA(n+1) + diphosphate. DNA-dependent RNA polymerase catalyzes the transcription of DNA into RNA using the four ribonucleoside triphosphates as substrates. The sequence is that of DNA-directed RNA polymerase subunit beta from Coxiella burnetii (strain CbuG_Q212) (Coxiella burnetii (strain Q212)).